Reading from the N-terminus, the 305-residue chain is Homoserine kinase (305 aa).

93–103 (PLSRGLGSSAT) contacts ATP.

It belongs to the GHMP kinase family. Homoserine kinase subfamily.

It localises to the cytoplasm. It catalyses the reaction L-homoserine + ATP = O-phospho-L-homoserine + ADP + H(+). Its pathway is amino-acid biosynthesis; L-threonine biosynthesis; L-threonine from L-aspartate: step 4/5. Functionally, catalyzes the ATP-dependent phosphorylation of L-homoserine to L-homoserine phosphate. This is Homoserine kinase from Picosynechococcus sp. (strain ATCC 27264 / PCC 7002 / PR-6) (Agmenellum quadruplicatum).